The primary structure comprises 636 residues: Rust resistance kinase Lr10 (636 aa).

Positions 1–24 (MSKLLVIALLLLPLINHGIYLATA) are cleaved as a signal peptide. Over 25–276 (WDDQDFFKYC…MPDPHGSHIK (252 aa)) the chain is Extracellular. N-linked (GlcNAc...) asparagine glycosylation is found at asparagine 56, asparagine 177, and asparagine 222. A helical membrane pass occupies residues 277 to 297 (VIAATSSVAAFVALLLTVATV). Residues 298–636 (LYLSLKTRYN…FVSSENELMS (339 aa)) are Cytoplasmic-facing. The Protein kinase domain maps to 339–628 (RRFKEKVGQG…SLQMPPKPFV (290 aa)). Residues 345-353 (VGQGGFGSV) and lysine 367 each bind ATP. The active-site Proton acceptor is aspartate 466.

The protein belongs to the protein kinase superfamily. Ser/Thr protein kinase family. As to expression, specifically expressed in the aerial parts of the plant.

Its subcellular location is the cell membrane. It catalyses the reaction L-seryl-[protein] + ATP = O-phospho-L-seryl-[protein] + ADP + H(+). The catalysed reaction is L-threonyl-[protein] + ATP = O-phospho-L-threonyl-[protein] + ADP + H(+). The chain is Rust resistance kinase Lr10 from Triticum aestivum (Wheat).